Here is a 229-residue protein sequence, read N- to C-terminus: Prolactin (229 aa).

The first 30 residues, 1–30, serve as a signal peptide directing secretion; sequence MDSKVSSQKGSRLLLLLVVSNLLLCQGVVS. Residues C34 and C41 are joined by a disulfide bond. S56, S64, and S120 each carry phosphoserine. 2 disulfide bridges follow: C88–C204 and C221–C229.

The protein belongs to the somatotropin/prolactin family. In terms of assembly, interacts with PRLR.

Its subcellular location is the secreted. Prolactin acts primarily on the mammary gland by promoting lactation. This is Prolactin (PRL) from Cervus elaphus (Red deer).